The chain runs to 83 residues: Small ribosomal subunit protein bS20 (83 aa).

It belongs to the bacterial ribosomal protein bS20 family.

Binds directly to 16S ribosomal RNA. The protein is Small ribosomal subunit protein bS20 of Staphylococcus carnosus (strain TM300).